A 501-amino-acid chain; its full sequence is Ribose import ATP-binding protein RbsA (501 aa).

2 ABC transporter domains span residues 5-241 and 252-495; these read LQLK…VGRK and APGE…VGKL. 37–44 is an ATP binding site; it reads GENGAGKS.

This sequence belongs to the ABC transporter superfamily. Ribose importer (TC 3.A.1.2.1) family. In terms of assembly, the complex is composed of an ATP-binding protein (RbsA), two transmembrane proteins (RbsC) and a solute-binding protein (RbsB).

The protein resides in the cell inner membrane. It carries out the reaction D-ribose(out) + ATP + H2O = D-ribose(in) + ADP + phosphate + H(+). Part of the ABC transporter complex RbsABC involved in ribose import. Responsible for energy coupling to the transport system. This chain is Ribose import ATP-binding protein RbsA, found in Salmonella typhi.